Consider the following 551-residue polypeptide: Scaffold protein OPG125 (551 aa).

The protein belongs to the orthopoxvirus protein OPG125 family. In terms of assembly, interacts with the late transcription elongation factor VLTF-4/OPG110. Interacts with the late transcription factors VLTF-1.

It is found in the membrane. Functionally, acts with RNA polymerase to initiate transcription from late gene promoters. This is Scaffold protein OPG125 (OPG125) from Monkeypox virus.